A 250-amino-acid chain; its full sequence is Thiamine thiazole synthase (250 aa).

Residues Ser-36, 55–56 (EE), Gly-63, Val-126, and 152–154 (HVD) each bind NAD(+). Residues Asp-154 and His-169 each contribute to the Fe cation site. Met-216 is a binding site for NAD(+). Glycine is bound at residue Arg-226.

It belongs to the THI4 family. As to quaternary structure, homooctamer; tetramer of dimers. Fe(2+) serves as cofactor.

It carries out the reaction hydrogen sulfide + glycine + NAD(+) = ADP-5-ethyl-4-methylthiazole-2-carboxylate + nicotinamide + 3 H2O + H(+). It functions in the pathway cofactor biosynthesis; thiamine diphosphate biosynthesis. Its function is as follows. Involved in the biosynthesis of the thiazole moiety of thiamine. Catalyzes the conversion of NAD and glycine to adenosine diphosphate 5-(2-hydroxyethyl)-4-methylthiazole-2-carboxylate (ADT), an adenylated thiazole intermediate, using free sulfide as a source of sulfur. In Thermotoga maritima (strain ATCC 43589 / DSM 3109 / JCM 10099 / NBRC 100826 / MSB8), this protein is Thiamine thiazole synthase.